We begin with the raw amino-acid sequence, 94 residues long: Pyrimidine/purine nucleoside phosphorylase (94 aa).

This sequence belongs to the nucleoside phosphorylase PpnP family.

It carries out the reaction a purine D-ribonucleoside + phosphate = a purine nucleobase + alpha-D-ribose 1-phosphate. The enzyme catalyses adenosine + phosphate = alpha-D-ribose 1-phosphate + adenine. It catalyses the reaction cytidine + phosphate = cytosine + alpha-D-ribose 1-phosphate. The catalysed reaction is guanosine + phosphate = alpha-D-ribose 1-phosphate + guanine. It carries out the reaction inosine + phosphate = alpha-D-ribose 1-phosphate + hypoxanthine. The enzyme catalyses thymidine + phosphate = 2-deoxy-alpha-D-ribose 1-phosphate + thymine. It catalyses the reaction uridine + phosphate = alpha-D-ribose 1-phosphate + uracil. The catalysed reaction is xanthosine + phosphate = alpha-D-ribose 1-phosphate + xanthine. In terms of biological role, catalyzes the phosphorolysis of diverse nucleosides, yielding D-ribose 1-phosphate and the respective free bases. Can use uridine, adenosine, guanosine, cytidine, thymidine, inosine and xanthosine as substrates. Also catalyzes the reverse reactions. The protein is Pyrimidine/purine nucleoside phosphorylase of Pseudomonas putida (strain GB-1).